We begin with the raw amino-acid sequence, 266 residues long: Undecaprenyl-diphosphatase 1 (266 aa).

The next 8 membrane-spanning stretches (helical) occupy residues 1-21 (MDTFQVIILALIQGLTEFLPI), 39-59 (QGLSFDVAVNTGSLFAVVIYF), 87-107 (WWIILATLPAVFFGFMAKDFI), 114-134 (TGVIAVTTVVFGLLLWWADKM), 149-169 (ALLIGFAQALALIPGTSRSGA), 183-203 (AAARFSFLMSVPVSLGAAILV), 218-238 (ALTLGTVISFAAAYLCIHYFL), and 246-266 (MTPFVIYRLALGAVLCGFIFL).

This sequence belongs to the UppP family.

It localises to the cell inner membrane. The catalysed reaction is di-trans,octa-cis-undecaprenyl diphosphate + H2O = di-trans,octa-cis-undecaprenyl phosphate + phosphate + H(+). In terms of biological role, catalyzes the dephosphorylation of undecaprenyl diphosphate (UPP). Confers resistance to bacitracin. In Shewanella oneidensis (strain ATCC 700550 / JCM 31522 / CIP 106686 / LMG 19005 / NCIMB 14063 / MR-1), this protein is Undecaprenyl-diphosphatase 1.